We begin with the raw amino-acid sequence, 454 residues long: Putative KilA-N domain-containing protein L4 (454 aa).

The span at 1 to 12 (MPQKTSKSKSSR) shows a compositional bias: basic residues. The tract at residues 1–159 (MPQKTSKSKS…DVPEEEYDDN (159 aa)) is disordered. The segment covering 14-64 (RYIEDSDDETRGRSRNRSIEKSRSRSLDKSQKKSRDKSLTRSRSKSPEKSK) has biased composition (basic and acidic residues). Positions 65-79 (SRSKSLTRSRSKSPK) are enriched in basic residues. Acidic residues-rich tracts occupy residues 98 to 123 (YTTEESDEESDDESDGETNEESDEEL) and 130 to 158 (ESDEEISEESDEEISEESDEDVPEEEYDD). The KilA-N domain maps to 172 to 276 (EFARGKFGDF…LKVSDIVIEY (105 aa)).

The protein is Putative KilA-N domain-containing protein L4 of Acanthamoeba polyphaga mimivirus (APMV).